The primary structure comprises 926 residues: Sperm-associated antigen 1 (926 aa).

3 TPR repeats span residues 209 to 242 (ATRE…LPTV), 244 to 275 (AYNN…EPGN), and 276 to 309 (VKAL…EPDN). A disordered region spans residues 318 to 452 (EVERDLKNSE…ENPAGLKSQG (135 aa)). Phosphoserine occurs at positions 347 and 354. Positions 352 to 368 (GKSGRKHEDGGGDKKPA) are enriched in basic and acidic residues. Positions 369–379 (EPAGAARAAQP) are enriched in low complexity. At serine 423 the chain carries Phosphoserine. The segment covering 428-441 (AGGGATGHPGGGQG) has biased composition (gly residues). 6 TPR repeats span residues 445–478 (PAGL…LEPA), 487–520 (SILY…HPFS), 522–554 (KPLL…DCGL), 623–656 (FKAL…NNKE), 657–690 (CAIY…ADGN), and 692–724 (KAFY…DPSI). Composition is skewed to basic and acidic residues over residues 758–769 (IQEVNEGKEEPG) and 784–799 (KGGK…EKLP). The tract at residues 758-801 (IQEVNEGKEEPGRPAGEVSMGCLASEKGGKSSRSPEDPEKLPIA) is disordered. A GTP-binding site is contributed by 781–788 (ASEKGGKS). Serine 791 carries the post-translational modification Phosphoserine.

As to expression, present in most tissues, including lung, with the strongest expression in brain, colon, kidney, and testis. In sperm and testis, detected in particular in pachytene primary spermatocytes. Up-regulated in pancreatic tumor tissues and not in normal pancreatic tissue.

It localises to the cytoplasm. The protein localises to the dynein axonemal particle. Functionally, may play a role in the cytoplasmic assembly of the ciliary dynein arms. May play a role in fertilization. Binds GTP and has GTPase activity. This is Sperm-associated antigen 1 (SPAG1) from Homo sapiens (Human).